Reading from the N-terminus, the 107-residue chain is Integration host factor subunit beta (107 aa).

A disordered region spans residues 78–107; sequence PHFKPGKELRERVDGRAGEPLKADEPDDER. A compositionally biased stretch (basic and acidic residues) spans 82-101; it reads PGKELRERVDGRAGEPLKAD.

The protein belongs to the bacterial histone-like protein family. As to quaternary structure, heterodimer of an alpha and a beta chain.

This protein is one of the two subunits of integration host factor, a specific DNA-binding protein that functions in genetic recombination as well as in transcriptional and translational control. The polypeptide is Integration host factor subunit beta (Burkholderia multivorans (strain ATCC 17616 / 249)).